Consider the following 725-residue polypeptide: Palmitoyltransferase AKR1 (725 aa).

The Cytoplasmic segment spans residues 1-303 (MGTIAMASIN…LKDKRSFVTR (303 aa)). ANK repeat units follow at residues 84–113 (EGITPLHWAAINNQYAMCKFLIEHGAEINR), 118–147 (SIATPLQWAAQRCHYYTVNLLLQHGADPLV), 151–180 (QGYNTLHISTFNGNVLLLVLLLHQGIPVDV), 184–213 (FGHTALMWAAYKGFPQCVDLFLRWGASVHA), and 217–246 (QGFTALHWALVKGSPGCILKLIEYGADRFA). A helical transmembrane segment spans residues 304–324 (FLFFWPFVLVWAMLVAMSSAP). Topologically, residues 325 to 326 (VY) are lumenal. The chain crosses the membrane as a helical span at residues 327–347 (IGVPLGIAAVYAIQWVAQQVL). At 348–364 (EYAPSDMRHFHKTPWLT) the chain is on the cytoplasmic side. A helical transmembrane segment spans residues 365–385 (GIFAATLFWTGVNWLTTVLFA). Residues 386-397 (TTLGAPEGKGHG) lie on the Lumenal side of the membrane. A helical membrane pass occupies residues 398 to 418 (ILNFLFALFFGFTVYFYIASM). Residues 419–495 (RYDPGFVPKM…NCVGINNHRH (77 aa)) are Cytoplasmic-facing. Residues 451 to 501 (NFCVTCMIQTPLRSKHCRRCQRCVAKHDHHCPWVYNCVGINNHRHFFFYLI) form the DHHC domain. The active-site S-palmitoyl cysteine intermediate is the C481. Residues 496–516 (FFFYLISLTMGIVSYDFLLYY) form a helical membrane-spanning segment. Over 517–547 (YFDTVSKNASETCNVLSPTLCKYINADSYTS) the chain is Lumenal. A helical transmembrane segment spans residues 548 to 568 (ILAIWITMQLLWVTMLLFTQF). Residues 569 to 725 (IQVARAMTTY…YEAVGTEDVV (157 aa)) are Cytoplasmic-facing.

The protein belongs to the DHHC palmitoyltransferase family. AKR/ZDHHC17 subfamily.

The protein localises to the early endosome membrane. The protein resides in the golgi apparatus membrane. The catalysed reaction is L-cysteinyl-[protein] + hexadecanoyl-CoA = S-hexadecanoyl-L-cysteinyl-[protein] + CoA. Palmitoyltransferase specific for casein kinase 1. This chain is Palmitoyltransferase AKR1 (AKR1), found in Gibberella zeae (strain ATCC MYA-4620 / CBS 123657 / FGSC 9075 / NRRL 31084 / PH-1) (Wheat head blight fungus).